The following is a 171-amino-acid chain: Small ribosomal subunit protein mS25 (171 aa).

The protein belongs to the mitochondrion-specific ribosomal protein mS25 family. Component of the mitochondrial ribosome small subunit (28S) which comprises a 12S rRNA and about 30 distinct proteins.

It is found in the mitochondrion. The sequence is that of Small ribosomal subunit protein mS25 (Mrps25) from Mus musculus (Mouse).